The chain runs to 289 residues: ATP synthase gamma chain (289 aa).

Belongs to the ATPase gamma chain family. As to quaternary structure, F-type ATPases have 2 components, CF(1) - the catalytic core - and CF(0) - the membrane proton channel. CF(1) has five subunits: alpha(3), beta(3), gamma(1), delta(1), epsilon(1). CF(0) has three main subunits: a, b and c.

Its subcellular location is the cell membrane. In terms of biological role, produces ATP from ADP in the presence of a proton gradient across the membrane. The gamma chain is believed to be important in regulating ATPase activity and the flow of protons through the CF(0) complex. The protein is ATP synthase gamma chain of Lactococcus lactis subsp. cremoris (strain MG1363).